The sequence spans 344 residues: Anthranilate phosphoribosyltransferase (344 aa).

5-phospho-alpha-D-ribose 1-diphosphate is bound by residues G81, 84–85 (GD), S89, 91–94 (NIST), 109–117 (KHGNRALSS), and A121. Residue G81 coordinates anthranilate. Position 93 (S93) interacts with Mg(2+). N112 provides a ligand contact to anthranilate. Position 167 (R167) interacts with anthranilate. Positions 226 and 227 each coordinate Mg(2+).

The protein belongs to the anthranilate phosphoribosyltransferase family. Homodimer. The cofactor is Mg(2+).

The catalysed reaction is N-(5-phospho-beta-D-ribosyl)anthranilate + diphosphate = 5-phospho-alpha-D-ribose 1-diphosphate + anthranilate. Its pathway is amino-acid biosynthesis; L-tryptophan biosynthesis; L-tryptophan from chorismate: step 2/5. Functionally, catalyzes the transfer of the phosphoribosyl group of 5-phosphorylribose-1-pyrophosphate (PRPP) to anthranilate to yield N-(5'-phosphoribosyl)-anthranilate (PRA). In Azorhizobium caulinodans (strain ATCC 43989 / DSM 5975 / JCM 20966 / LMG 6465 / NBRC 14845 / NCIMB 13405 / ORS 571), this protein is Anthranilate phosphoribosyltransferase.